The primary structure comprises 116 residues: Small ribosomal subunit protein uS13 (116 aa).

The disordered stretch occupies residues 92–116 (RRGLPVRGQNTKNNARTRKGTKRNR). Over residues 106–116 (ARTRKGTKRNR) the composition is skewed to basic residues.

Belongs to the universal ribosomal protein uS13 family. In terms of assembly, part of the 30S ribosomal subunit. Forms a loose heterodimer with protein S19. Forms two bridges to the 50S subunit in the 70S ribosome.

Located at the top of the head of the 30S subunit, it contacts several helices of the 16S rRNA. In the 70S ribosome it contacts the 23S rRNA (bridge B1a) and protein L5 of the 50S subunit (bridge B1b), connecting the 2 subunits; these bridges are implicated in subunit movement. Contacts the tRNAs in the A and P-sites. The chain is Small ribosomal subunit protein uS13 from Lactobacillus acidophilus (strain ATCC 700396 / NCK56 / N2 / NCFM).